We begin with the raw amino-acid sequence, 198 residues long: MGVSWVFEAEQTAKSVERILEGIGAELMGQFQVDVIPYNPATPSTDYATNIVMHHSKCPQSTFSICPKTDFRVSPKAVCDRGFDLILGKLAGGLVIDNAGKIEINGNEYNIHSDWTVRVGTATQGTTVKGVVVEVEYDPTVIIVQCREMMAEFIKQVFNKYHETQPEIFKITEKPERYSTLDTMWQYLQIAAKLRKKT.

The protein belongs to the Mediator complex subunit 20 family. As to quaternary structure, component of the Mediator complex.

The protein localises to the nucleus. Functionally, component of the Mediator complex, a coactivator involved in the regulated transcription of nearly all RNA polymerase II-dependent genes. Mediator functions as a bridge to convey information from gene-specific regulatory proteins to the basal RNA polymerase II transcription machinery. Mediator is recruited to promoters by direct interactions with regulatory proteins and serves as a scaffold for the assembly of a functional preinitiation complex with RNA polymerase II and the general transcription factors. This chain is Mediator of RNA polymerase II transcription subunit 20 (mdt-20), found in Caenorhabditis briggsae.